The chain runs to 290 residues: DegV domain-containing protein MG450 (290 aa).

A DegV domain is found at Ile3–Thr289. The hexadecanoate site is built by Thr65 and Ser97.

Functionally, may bind long-chain fatty acids, such as palmitate, and may play a role in lipid transport or fatty acid metabolism. This is DegV domain-containing protein MG450 from Mycoplasma genitalium (strain ATCC 33530 / DSM 19775 / NCTC 10195 / G37) (Mycoplasmoides genitalium).